The chain runs to 496 residues: Zinc finger protein PLAGL2 (496 aa).

6 consecutive C2H2-type zinc fingers follow at residues Tyr68–His92, His98–His120, Leu127–His149, Leu156–His178, His191–His213, and Phe219–His242.

Belongs to the krueppel C2H2-type zinc-finger protein family.

It localises to the nucleus. Its function is as follows. Shows weak transcriptional activatory activity. This Homo sapiens (Human) protein is Zinc finger protein PLAGL2 (PLAGL2).